Consider the following 574-residue polypeptide: Cytochrome P450 4g15 (574 aa).

The tract at residues 288–327 (REREQNGGVDQTPSTAGSDEKDREKDKEKASPVAGLSYGQ) is disordered. The span at 295–304 (GVDQTPSTAG) shows a compositional bias: polar residues. Residues 305 to 317 (SDEKDREKDKEKA) show a composition bias toward basic and acidic residues. 2 residues coordinate heme: Glu379 and Cys519.

It belongs to the cytochrome P450 family. The cofactor is heme. In terms of tissue distribution, expressed in larval brain cortex cells and ring glands and weakly in larval digestive system and adult nervous system.

It localises to the endoplasmic reticulum membrane. Its subcellular location is the microsome membrane. Its function is as follows. Probably involved in steroid hormones biosynthesis. The chain is Cytochrome P450 4g15 (Cyp4g15) from Drosophila melanogaster (Fruit fly).